The following is a 111-amino-acid chain: Large ribosomal subunit protein uL23 (111 aa).

This sequence belongs to the universal ribosomal protein uL23 family. As to quaternary structure, part of the 50S ribosomal subunit. Contacts protein L29, and trigger factor when it is bound to the ribosome.

In terms of biological role, one of the early assembly proteins it binds 23S rRNA. One of the proteins that surrounds the polypeptide exit tunnel on the outside of the ribosome. Forms the main docking site for trigger factor binding to the ribosome. The protein is Large ribosomal subunit protein uL23 of Nitrosomonas eutropha (strain DSM 101675 / C91 / Nm57).